Consider the following 267-residue polypeptide: Undecaprenyl-diphosphatase (267 aa).

Helical transmembrane passes span L7–L29, F41–F61, L69–V89, L96–I116, A173–I193, I207–F227, and F239–L259.

It belongs to the UppP family.

The protein localises to the cell inner membrane. The enzyme catalyses di-trans,octa-cis-undecaprenyl diphosphate + H2O = di-trans,octa-cis-undecaprenyl phosphate + phosphate + H(+). Its function is as follows. Catalyzes the dephosphorylation of undecaprenyl diphosphate (UPP). Confers resistance to bacitracin. This chain is Undecaprenyl-diphosphatase, found in Campylobacter jejuni subsp. jejuni serotype O:6 (strain 81116 / NCTC 11828).